Here is a 260-residue protein sequence, read N- to C-terminus: Snake venom serine proteinase 12 (260 aa).

A signal peptide spans 1–18; it reads MVLIRVLANLLILQLSYA. The propeptide occupies 19–24; that stretch reads QKSSEL. A Peptidase S1 domain is found at 25 to 251; the sequence is VIGGDECNIN…HLDWIQSIIA (227 aa). Intrachain disulfides connect Cys31-Cys163, Cys50-Cys66, Cys98-Cys258, Cys142-Cys212, Cys174-Cys191, and Cys202-Cys227. Catalysis depends on His65, which acts as the Charge relay system. A glycan (N-linked (GlcNAc...) asparagine) is linked at Asn103. Catalysis depends on Asp110, which acts as the Charge relay system. The active-site Charge relay system is Ser206.

Belongs to the peptidase S1 family. Snake venom subfamily. Monomer. Expressed by the venom gland.

It localises to the secreted. Functionally, snake venom serine protease that may act in the hemostasis system of the prey. The protein is Snake venom serine proteinase 12 of Crotalus adamanteus (Eastern diamondback rattlesnake).